The primary structure comprises 553 residues: Meiotic expression up-regulated protein 18 (553 aa).

The disordered stretch occupies residues 267–305; sequence SNETLCSNDSKHRIARLKNEDNTQKPISKKRKSKKASHK. Residues 275–289 are compositionally biased toward basic and acidic residues; sequence DSKHRIARLKNEDNT. Basic residues predominate over residues 293–304; it reads ISKKRKSKKASH.

The polypeptide is Meiotic expression up-regulated protein 18 (meu18) (Schizosaccharomyces pombe (strain 972 / ATCC 24843) (Fission yeast)).